We begin with the raw amino-acid sequence, 514 residues long: Nucleus accumbens-associated protein 1 (514 aa).

Positions 30-94 (CDVSVVVKGH…CYTGRLSMNM (65 aa)) constitute a BTB domain. A Glycyl lysine isopeptide (Lys-Gly) (interchain with G-Cter in SUMO1); alternate cross-link involves residue Lys-167. Lys-167 participates in a covalent cross-link: Glycyl lysine isopeptide (Lys-Gly) (interchain with G-Cter in SUMO2); alternate. Residue Lys-182 forms a Glycyl lysine isopeptide (Lys-Gly) (interchain with G-Cter in SUMO2) linkage. Disordered regions lie at residues 183 to 205 (RLWDSSQKEAGGSGGNNGSRKMA) and 242 to 279 (PSMSERTSPGTSSAYTSDSPSSYHNEEDEEEDAGEEGT). At Ser-187 the chain carries Phosphoserine. Positions 242–251 (PSMSERTSPG) are enriched in polar residues. The residue at position 245 (Ser-245) is a Phosphoserine; by PKC. Residues 252-264 (TSSAYTSDSPSSY) are compositionally biased toward low complexity. The span at 267-279 (EEDEEEDAGEEGT) shows a compositional bias: acidic residues. Residues Lys-304, Lys-438, Lys-466, and Lys-485 each participate in a glycyl lysine isopeptide (Lys-Gly) (interchain with G-Cter in SUMO2) cross-link. Positions 360–457 (GTNVYITRAQ…DMCTNARRVV (98 aa)) constitute a BEN domain. A phosphoserine mark is found at Ser-492 and Ser-496.

In terms of assembly, homooligomer; mediated by the BTB domain. Interacts with HDAC3 and HDAC4. Interacts (via BTB domain) with CUL3, PSMD7 and RCOR1. In terms of tissue distribution, ubiquitously expressed with higher expression in the brain, kidney and liver, and at lower levels in heart, lung and testes.

The protein resides in the nucleus. It is found in the cytoplasm. Its function is as follows. Functions as a transcriptional repressor. Seems to function as a transcriptional corepressor in neuronal cells through recruitment of HDAC3 and HDAC4. Contributes to tumor progression, and tumor cell proliferation and survival. This may be mediated at least in part through repressing transcriptional activity of GADD45GIP1. Required for recruiting the proteasome from the nucleus to the cytoplasm and dendritic spines. Involved in the acute behavioral and neurological responses to cocaine and amphetamines. This chain is Nucleus accumbens-associated protein 1 (Nacc1), found in Mus musculus (Mouse).